A 122-amino-acid polypeptide reads, in one-letter code: Large ribosomal subunit protein eL31 (122 aa).

This sequence belongs to the eukaryotic ribosomal protein eL31 family.

This Caenorhabditis elegans protein is Large ribosomal subunit protein eL31.